A 693-amino-acid chain; its full sequence is Glycine--tRNA ligase beta subunit (693 aa).

The protein belongs to the class-II aminoacyl-tRNA synthetase family. Tetramer of two alpha and two beta subunits.

It is found in the cytoplasm. It catalyses the reaction tRNA(Gly) + glycine + ATP = glycyl-tRNA(Gly) + AMP + diphosphate. This is Glycine--tRNA ligase beta subunit from Ligilactobacillus salivarius (strain UCC118) (Lactobacillus salivarius).